The sequence spans 99 residues: Protein RnfH (99 aa).

It belongs to the UPF0125 (RnfH) family.

The protein is Protein RnfH of Tolumonas auensis (strain DSM 9187 / NBRC 110442 / TA 4).